A 212-amino-acid polypeptide reads, in one-letter code: Pyridoxine/pyridoxamine 5'-phosphate oxidase (212 aa).

Substrate is bound by residues 8-11 and lysine 66; that span reads RRTY. FMN is bound by residues 61–66, 76–77, arginine 82, lysine 83, and glutamine 105; these read RIVLLK and FT. Tyrosine 123, arginine 127, and serine 131 together coordinate substrate. FMN is bound by residues 140-141 and tryptophan 184; that span reads QS. 190 to 192 contacts substrate; sequence RLH. Arginine 194 contributes to the FMN binding site.

Belongs to the pyridoxamine 5'-phosphate oxidase family. In terms of assembly, homodimer. The cofactor is FMN.

The catalysed reaction is pyridoxamine 5'-phosphate + O2 + H2O = pyridoxal 5'-phosphate + H2O2 + NH4(+). It carries out the reaction pyridoxine 5'-phosphate + O2 = pyridoxal 5'-phosphate + H2O2. It participates in cofactor metabolism; pyridoxal 5'-phosphate salvage; pyridoxal 5'-phosphate from pyridoxamine 5'-phosphate: step 1/1. It functions in the pathway cofactor metabolism; pyridoxal 5'-phosphate salvage; pyridoxal 5'-phosphate from pyridoxine 5'-phosphate: step 1/1. Catalyzes the oxidation of either pyridoxine 5'-phosphate (PNP) or pyridoxamine 5'-phosphate (PMP) into pyridoxal 5'-phosphate (PLP). The sequence is that of Pyridoxine/pyridoxamine 5'-phosphate oxidase from Cupriavidus pinatubonensis (strain JMP 134 / LMG 1197) (Cupriavidus necator (strain JMP 134)).